A 722-amino-acid polypeptide reads, in one-letter code: Glycine--tRNA ligase beta subunit (722 aa).

The protein belongs to the class-II aminoacyl-tRNA synthetase family. As to quaternary structure, tetramer of two alpha and two beta subunits.

The protein resides in the cytoplasm. The catalysed reaction is tRNA(Gly) + glycine + ATP = glycyl-tRNA(Gly) + AMP + diphosphate. The sequence is that of Glycine--tRNA ligase beta subunit (glyS) from Xylella fastidiosa (strain 9a5c).